Reading from the N-terminus, the 635-residue chain is MINIKFPDGSIREFESGVNSLQIAKSISPSLAKITVGAYIDNKLSDAKDVINHDCELRLITTKDTEGLEILRHSCAHLLANAVKELYPNTEVTIGPVIDNGFYYDFSFKETIGEADLANIEKRMKEIAKKGSSISYKVVSKEDAIAFFKAQGENYKVDIIESIPADQQIKIYTQGDFSDLCRGPHVPSTAAIKAFKLTKLAGAYWRGDSNNEMLTRIYGTCWATKEDLDQYLHMLEEAEKRDHRKIGKALDLFHFQEDSPGIAFWHDNGVRIWREVEDYMRASNKKYGCGEIRTPLIADFSLWEKSGHASKYAENMFATKSENRDFAIRPMNCPTCVQVYNTKLHSYRDLPIRMAEFGIVHRNEPSGSLHGLMRVRSFTQDDGHIFCAPEQVEEEVILMVKQCFEVYKDFGFNDFTVKIALRPENRIGNDETWDKSEQMLKNALDANNVAYELLPGEGAFYGPKIEFHLKDAIGRSWQCGTIQLDFSMPDRLGATYIDKNGNKQVPVMLHRAIVGSLERFIGMLIEHYAGNMPLWLTPVQVAVMGISNHQDEYCQKVFETLEKNGIRAKLDLRNEKIGFKIREHTLLRVPYLVILGKSEQEQEIVTVRKHNGEDLGQMSIGDFCAFLNEQIEAKK.

One can recognise a TGS domain in the interval 1–61 (MINIKFPDGS…NHDCELRLIT (61 aa)). A catalytic region spans residues 242-533 (DHRKIGKALD…LIEHYAGNMP (292 aa)). Zn(2+)-binding residues include cysteine 333, histidine 384, and histidine 510.

The protein belongs to the class-II aminoacyl-tRNA synthetase family. As to quaternary structure, homodimer. The cofactor is Zn(2+).

It localises to the cytoplasm. It catalyses the reaction tRNA(Thr) + L-threonine + ATP = L-threonyl-tRNA(Thr) + AMP + diphosphate + H(+). Catalyzes the attachment of threonine to tRNA(Thr) in a two-step reaction: L-threonine is first activated by ATP to form Thr-AMP and then transferred to the acceptor end of tRNA(Thr). Also edits incorrectly charged L-seryl-tRNA(Thr). This Francisella philomiragia subsp. philomiragia (strain ATCC 25017 / CCUG 19701 / FSC 153 / O#319-036) protein is Threonine--tRNA ligase.